The following is a 1024-amino-acid chain: Beta-galactosidase (1024 aa).

Substrate contacts are provided by N103 and D202. Position 202 (D202) interacts with Na(+). Mg(2+) is bound by residues E417, H419, and E462. Substrate-binding positions include E462 and 538–541; that span reads EYAH. E462 acts as the Proton donor in catalysis. Residue E538 is the Nucleophile of the active site. N598 contributes to the Mg(2+) binding site. F602 and N605 together coordinate Na(+). The substrate site is built by N605 and W1000.

It belongs to the glycosyl hydrolase 2 family. Homotetramer. Mg(2+) serves as cofactor. Requires Na(+) as cofactor.

It catalyses the reaction Hydrolysis of terminal non-reducing beta-D-galactose residues in beta-D-galactosides.. In Escherichia coli O127:H6 (strain E2348/69 / EPEC), this protein is Beta-galactosidase.